Consider the following 677-residue polypeptide: Methionine--tRNA ligase (677 aa).

The 'HIGH' region signature appears at 15–25; it reads PYANGSIHLGH. Residues Cys146, Cys149, Cys159, and Cys162 each contribute to the Zn(2+) site. Positions 333-337 match the 'KMSKS' region motif; sequence KMSKS. Lys336 contributes to the ATP binding site. The region spanning 575 to 677 is the tRNA-binding domain; that stretch reads DFAKVDLRVA…AGAKPGHQVK (103 aa).

It belongs to the class-I aminoacyl-tRNA synthetase family. MetG type 1 subfamily. In terms of assembly, homodimer. Zn(2+) serves as cofactor.

The protein resides in the cytoplasm. It carries out the reaction tRNA(Met) + L-methionine + ATP = L-methionyl-tRNA(Met) + AMP + diphosphate. Functionally, is required not only for elongation of protein synthesis but also for the initiation of all mRNA translation through initiator tRNA(fMet) aminoacylation. This Escherichia fergusonii (strain ATCC 35469 / DSM 13698 / CCUG 18766 / IAM 14443 / JCM 21226 / LMG 7866 / NBRC 102419 / NCTC 12128 / CDC 0568-73) protein is Methionine--tRNA ligase.